The primary structure comprises 355 residues: C-C chemokine receptor type 3 (355 aa).

Over 1-34 the chain is Extracellular; the sequence is MTTSLDTVETFGPTSYDDDMGLLCEKADVGALIA. The chain crosses the membrane as a helical span at residues 35 to 62; it reads QFVPPLYSLVFMVGLLGNVVVVMILIKY. Over 63 to 72 the chain is Cytoplasmic; that stretch reads RRLRIMTNIY. The helical transmembrane segment at 73–93 threads the bilayer; sequence LLNLAISDLLFLFTLPFWIHY. The Extracellular segment spans residues 94–107; it reads VRERNWVFSHGMCK. Residues Cys-106 and Cys-183 are joined by a disulfide bond. Residues 108-129 form a helical membrane-spanning segment; that stretch reads VLSGFYHTGLYSEIFFIILLTI. The Cytoplasmic segment spans residues 130 to 146; it reads DRYLAIVHAVFALRART. The chain crosses the membrane as a helical span at residues 147 to 171; sequence VTFGVVTSIVTWGLAVLAALPEFIF. Residues 172–203 lie on the Extracellular side of the membrane; the sequence is YGTEELFPETLCSAIYPQDTVYSWRHFHTLRM. Residues 204 to 223 traverse the membrane as a helical segment; that stretch reads TILCLALPLLVMAICYTGII. Residues 224 to 239 lie on the Cytoplasmic side of the membrane; it reads KTLLRCPSKKKYKAIR. Residues 240 to 264 traverse the membrane as a helical segment; it reads LIFVIMAVFFIFWTPYNVAILISTY. At 265–281 the chain is on the extracellular side; it reads QSILFGPDCERSKHLDL. The helical transmembrane segment at 282-305 threads the bilayer; sequence FVLVTEVIAYSHCWVNPVIYAFVG. At 306–355 the chain is on the cytoplasmic side; the sequence is ERFRKYLRHFFHRHVLMHPGKYIPFLPSEKLERTSSVSPSTAEPELSIVF.

Belongs to the G-protein coupled receptor 1 family.

It is found in the cell membrane. In terms of biological role, receptor for C-C type chemokine. Binds and responds to a variety of chemokines, including CCL11, CCL26, CCL7, CCL13, RANTES(CCL5) and CCL15. Subsequently transduces a signal by increasing the intracellular calcium ions level. In addition acts as a possible functional receptor for NARS1. In Macaca fascicularis (Crab-eating macaque), this protein is C-C chemokine receptor type 3 (CCR3).